The primary structure comprises 447 residues: Putative branched-chain amino acid carrier protein SERP0977 (447 aa).

The next 12 membrane-spanning stretches (helical) occupy residues 5–25 (TWII…LIFP), 40–60 (ILAF…VGAL), 74–94 (PRFS…LFAI), 114–134 (GNLA…YLCL), 143–163 (IGSL…IKGF), 193–213 (GYLT…VNAI), 229–249 (IIAG…LGYI), 290–310 (LLGI…IVSV), 317–337 (IIPK…SFIL), 350–370 (VPVL…ILIA), 382–402 (IPLI…QGWI), and 417–437 (LEWF…SYFV).

Belongs to the branched chain amino acid transporter family.

It is found in the cell membrane. Its function is as follows. Component of the transport system for branched-chain amino acids (leucine, isoleucine and valine), which is coupled to a proton motive force. In Staphylococcus epidermidis (strain ATCC 35984 / DSM 28319 / BCRC 17069 / CCUG 31568 / BM 3577 / RP62A), this protein is Putative branched-chain amino acid carrier protein SERP0977.